Reading from the N-terminus, the 285-residue chain is Undecaprenyl-diphosphatase 2 (285 aa).

8 helical membrane-spanning segments follow: residues 5-25 (MDLL…LLPV), 47-67 (MTFL…VYFW), 86-106 (WYVL…QSLI), 122-142 (LFSN…LIIL), 156-176 (LPSA…RGFS), 198-218 (FSFA…LVRL), 235-255 (SLLL…LLAL), and 265-285 (GRWY…LTLA).

It belongs to the UppP family.

Its subcellular location is the cell inner membrane. It carries out the reaction di-trans,octa-cis-undecaprenyl diphosphate + H2O = di-trans,octa-cis-undecaprenyl phosphate + phosphate + H(+). Its function is as follows. Catalyzes the dephosphorylation of undecaprenyl diphosphate (UPP). Confers resistance to bacitracin. This is Undecaprenyl-diphosphatase 2 from Acinetobacter baylyi (strain ATCC 33305 / BD413 / ADP1).